A 1254-amino-acid chain; its full sequence is Zinc finger protein BRUTUS-like At1g18910 (1254 aa).

Residues 1-30 form a disordered region; it reads MGVGDPLPLPPEKNRREVNKPPDIASTSSS. A helical membrane pass occupies residues 454-474; the sequence is IHFLPLGLLKCVIMWFSAQLP. The CHY-type zinc finger occupies 1013–1082; the sequence is PHKLIFGCKH…ASCSNISCSS (70 aa). C1020, H1022, C1033, C1034, C1040, C1043, H1044, H1050, C1062, C1065, C1075, C1080, C1089, C1092, H1103, C1104, C1107, C1110, H1122, C1123, C1126, C1129, H1137, and C1139 together coordinate Zn(2+). Residues 1084–1147 form a CTCHY-type zinc finger; the sequence is MGKYYCKICK…VCREKCLEDN (64 aa). The segment at 1148–1190 adopts an RING-type; atypical zinc-finger fold; it reads CPICHEYIFTSNSPVKALPCGHVMHSTCFQEYTCSHYTCPICS.

Binds zinc and iron ions.

It is found in the membrane. Its subcellular location is the nucleus. The protein operates within protein modification; protein ubiquitination. Its function is as follows. Probable E3 ubiquitin-protein ligase that may regulate the response to iron deficiency and thus contributes to iron homeostasis. This chain is Zinc finger protein BRUTUS-like At1g18910, found in Arabidopsis thaliana (Mouse-ear cress).